Consider the following 180-residue polypeptide: ATP synthase subunit delta (180 aa).

This sequence belongs to the ATPase delta chain family. In terms of assembly, F-type ATPases have 2 components, F(1) - the catalytic core - and F(0) - the membrane proton channel. F(1) has five subunits: alpha(3), beta(3), gamma(1), delta(1), epsilon(1). F(0) has three main subunits: a(1), b(2) and c(10-14). The alpha and beta chains form an alternating ring which encloses part of the gamma chain. F(1) is attached to F(0) by a central stalk formed by the gamma and epsilon chains, while a peripheral stalk is formed by the delta and b chains.

The protein localises to the cell membrane. Functionally, f(1)F(0) ATP synthase produces ATP from ADP in the presence of a proton or sodium gradient. F-type ATPases consist of two structural domains, F(1) containing the extramembraneous catalytic core and F(0) containing the membrane proton channel, linked together by a central stalk and a peripheral stalk. During catalysis, ATP synthesis in the catalytic domain of F(1) is coupled via a rotary mechanism of the central stalk subunits to proton translocation. This protein is part of the stalk that links CF(0) to CF(1). It either transmits conformational changes from CF(0) to CF(1) or is implicated in proton conduction. This Ligilactobacillus salivarius (strain UCC118) (Lactobacillus salivarius) protein is ATP synthase subunit delta.